The chain runs to 459 residues: Cysteine--tRNA ligase (459 aa).

Residue Cys28 coordinates Zn(2+). The 'HIGH' region motif lies at 30–40 (VTVYDLCHFGH). The Zn(2+) site is built by Cys209, His234, and Glu238. Positions 266 to 270 (KMSKS) match the 'KMSKS' region motif. Lys269 serves as a coordination point for ATP.

This sequence belongs to the class-I aminoacyl-tRNA synthetase family. Monomer. Zn(2+) serves as cofactor.

The protein localises to the cytoplasm. The catalysed reaction is tRNA(Cys) + L-cysteine + ATP = L-cysteinyl-tRNA(Cys) + AMP + diphosphate. In Actinobacillus succinogenes (strain ATCC 55618 / DSM 22257 / CCUG 43843 / 130Z), this protein is Cysteine--tRNA ligase.